A 530-amino-acid chain; its full sequence is Amidase FVEG_08295 (530 aa).

Active-site charge relay system residues include lysine 138 and serine 214. Substrate contacts are provided by residues serine 214 and 235–238; that span reads IAGS. The active-site Acyl-ester intermediate is serine 238.

The protein belongs to the amidase family.

It carries out the reaction a monocarboxylic acid amide + H2O = a monocarboxylate + NH4(+). The protein operates within xenobiotic degradation. In terms of biological role, amidase; part of the Fusarium detoxification of benzoxazolinone cluster 1 (FDB1) involved in the degradation of benzoxazolinones produced by the host plant. Maize, wheat, and rye produce the 2 benzoxazinone phytoanticipins 2,4-dihy-droxy-7-methoxy-1,4-benzoxazin-3-one (DIMBOA) and 2,4-dihydroxy-1,4-benzoxazin-3-one (DIBOA) that, due to their inherent instability once released, spontaneously degrade to the more stable corresponding benzoxazolinones, 6-methoxy-2-benzoxazolinone (MBOA) and 2-benzoxazolinone (BOA), respectively. The first step in the detoxification of benzoxazolinones involves the hydrolysis of the cyclic ester bond of benzoxazolinones by the FDB1 cluster gamma-lactamase MBL1 to aminophenols. MBL1 is able to convert BOA into 2-aminophenol (2-AP), as well as MBOA into 5-methoxy-2-aminophenol (2-AMP). The FDB2 cluster N-malonyltransferase FDB2/NAT1 then metabolizes aminophenols via N-malonylation to non-toxic malonamic acids. FDB2/NAT1 converts 2-AP into N-(2-hydroxyphenyl) malonamic acid (HPMA) and 2-AMP into N-(2-hydroxy-4-methoxyphenyl) malonamic acid (HMPMA). The duplicated dienlactone hydrolases DLH1 and DLH2 may provide redundant function for hydrolyzing the lactone moiety in the BOA molecule. The roles of the amidases an other enzymes encoded by the 2 FDB clusters have not been identified so far. This chain is Amidase FVEG_08295, found in Gibberella moniliformis (strain M3125 / FGSC 7600) (Maize ear and stalk rot fungus).